Reading from the N-terminus, the 397-residue chain is Mannonate dehydratase (397 aa).

Belongs to the mannonate dehydratase family. The cofactor is Fe(2+). It depends on Mn(2+) as a cofactor.

It catalyses the reaction D-mannonate = 2-dehydro-3-deoxy-D-gluconate + H2O. Its pathway is carbohydrate metabolism; pentose and glucuronate interconversion. Catalyzes the dehydration of D-mannonate. This is Mannonate dehydratase from Yersinia pestis bv. Antiqua (strain Angola).